The sequence spans 442 residues: Histidine--tRNA ligase (442 aa).

The protein belongs to the class-II aminoacyl-tRNA synthetase family. As to quaternary structure, homodimer.

It is found in the cytoplasm. The enzyme catalyses tRNA(His) + L-histidine + ATP = L-histidyl-tRNA(His) + AMP + diphosphate + H(+). In Wolinella succinogenes (strain ATCC 29543 / DSM 1740 / CCUG 13145 / JCM 31913 / LMG 7466 / NCTC 11488 / FDC 602W) (Vibrio succinogenes), this protein is Histidine--tRNA ligase.